Consider the following 205-residue polypeptide: DNA-directed RNA polymerases IV and V subunit 4 (205 aa).

Positions M1–S79 are disordered. Residues N48–A60 are compositionally biased toward polar residues.

Belongs to the eukaryotic RPB4 RNA polymerase subunit family. In terms of assembly, component of the RNA polymerase IV and V complexes. Interacts with NRPD1 and NRPE1. In terms of tissue distribution, expressed in shoot meristematic region and in root tips. Detected in cotyledons, flowers and young leaves.

The protein resides in the nucleus. In terms of biological role, DNA-dependent RNA polymerase catalyzes the transcription of DNA into RNA using the four ribonucleoside triphosphates as substrates. Component of RNA polymerases IV and V which mediate short-interfering RNAs (siRNA) accumulation and subsequent RNA-directed DNA methylation-dependent (RdDM) transcriptional gene silencing (TGS) of endogenous repeated sequences, including transposable elements. Required for the de novo DNA methylation directed by the RdDM pathway. The protein is DNA-directed RNA polymerases IV and V subunit 4 (NRPD4) of Arabidopsis thaliana (Mouse-ear cress).